The primary structure comprises 412 residues: Argininosuccinate synthase (412 aa).

ATP is bound by residues 16–24 and alanine 44; that span reads AYSGGLDTS. L-citrulline is bound by residues tyrosine 96 and serine 101. Glycine 126 provides a ligand contact to ATP. The L-aspartate site is built by threonine 128, asparagine 132, and aspartate 133. Position 132 (asparagine 132) interacts with L-citrulline. L-citrulline-binding residues include arginine 136, serine 185, serine 194, glutamate 270, and tyrosine 282.

Belongs to the argininosuccinate synthase family. Type 1 subfamily. In terms of assembly, homotetramer.

It localises to the cytoplasm. It catalyses the reaction L-citrulline + L-aspartate + ATP = 2-(N(omega)-L-arginino)succinate + AMP + diphosphate + H(+). The protein operates within amino-acid biosynthesis; L-arginine biosynthesis; L-arginine from L-ornithine and carbamoyl phosphate: step 2/3. The protein is Argininosuccinate synthase of Shewanella baltica (strain OS195).